Consider the following 602-residue polypeptide: Alpha-(1-&gt;6)-mannopyranosyltransferase B (602 aa).

The next 13 helical transmembrane spans lie at 105 to 125, 148 to 168, 190 to 210, 244 to 264, 274 to 294, 320 to 340, 368 to 388, 404 to 424, 448 to 468, 472 to 492, 503 to 523, 546 to 566, and 571 to 591; these read IGTM…ALPV, MIVL…APLV, TFGA…QDIY, VPFI…SIAA, IVGG…AAGW, LILH…FLLV, GVLI…LGFV, VVAI…TVVV, WMSM…NLGL, TAAM…AFMV, IHAV…FPVV, LGVI…GLAL, and VFSI…VGWW.

It belongs to the MptA/B family.

It localises to the membrane. It participates in cell wall biogenesis; cell wall polysaccharide biosynthesis. Involved in the initiation of core alpha-(1-&gt;6) mannan biosynthesis of lipomannan (LM-A) and multi-mannosylated polymer (LM-B), extending triacylatedphosphatidyl-myo-inositol dimannoside (Ac1PIM2) and mannosylated glycolipid, 1,2-di-O-C16/C18:1-(alpha-D-mannopyranosyl)-(1-&gt;4)-(alpha-D-glucopyranosyluronic acid)-(1-&gt;3)-glycerol (Man1GlcAGroAc2), respectively. Catalyzes the addition of alpha-(1-&gt;6)-mannose residue. The protein is Alpha-(1-&gt;6)-mannopyranosyltransferase B (mptB) of Corynebacterium glutamicum (strain ATCC 13032 / DSM 20300 / JCM 1318 / BCRC 11384 / CCUG 27702 / LMG 3730 / NBRC 12168 / NCIMB 10025 / NRRL B-2784 / 534).